We begin with the raw amino-acid sequence, 177 residues long: Ribosome maturation factor RimM (177 aa).

Residues 100–177 (EDEYYWSDLV…TVLVAWPSDY (78 aa)) form the PRC barrel domain.

It belongs to the RimM family. In terms of assembly, binds ribosomal protein uS19.

It is found in the cytoplasm. Its function is as follows. An accessory protein needed during the final step in the assembly of 30S ribosomal subunit, possibly for assembly of the head region. Essential for efficient processing of 16S rRNA. May be needed both before and after RbfA during the maturation of 16S rRNA. It has affinity for free ribosomal 30S subunits but not for 70S ribosomes. In Psychrobacter cryohalolentis (strain ATCC BAA-1226 / DSM 17306 / VKM B-2378 / K5), this protein is Ribosome maturation factor RimM.